Here is a 316-residue protein sequence, read N- to C-terminus: Methionyl-tRNA formyltransferase (316 aa).

Residue Ser112–Pro115 participates in (6S)-5,6,7,8-tetrahydrofolate binding.

This sequence belongs to the Fmt family.

The catalysed reaction is L-methionyl-tRNA(fMet) + (6R)-10-formyltetrahydrofolate = N-formyl-L-methionyl-tRNA(fMet) + (6S)-5,6,7,8-tetrahydrofolate + H(+). Its function is as follows. Attaches a formyl group to the free amino group of methionyl-tRNA(fMet). The formyl group appears to play a dual role in the initiator identity of N-formylmethionyl-tRNA by promoting its recognition by IF2 and preventing the misappropriation of this tRNA by the elongation apparatus. The chain is Methionyl-tRNA formyltransferase from Trichlorobacter lovleyi (strain ATCC BAA-1151 / DSM 17278 / SZ) (Geobacter lovleyi).